The chain runs to 173 residues: Shikimate kinase (173 aa).

Residue 12-17 (GSGKTT) participates in ATP binding. A Mg(2+)-binding site is contributed by Thr16. Substrate contacts are provided by Asp34, Arg58, and Gly80. Arg118 lines the ATP pocket. Position 136 (Arg136) interacts with substrate.

Belongs to the shikimate kinase family. Monomer. Requires Mg(2+) as cofactor.

Its subcellular location is the cytoplasm. It carries out the reaction shikimate + ATP = 3-phosphoshikimate + ADP + H(+). It functions in the pathway metabolic intermediate biosynthesis; chorismate biosynthesis; chorismate from D-erythrose 4-phosphate and phosphoenolpyruvate: step 5/7. Its function is as follows. Catalyzes the specific phosphorylation of the 3-hydroxyl group of shikimic acid using ATP as a cosubstrate. In Moorella thermoacetica (strain ATCC 39073 / JCM 9320), this protein is Shikimate kinase.